A 339-amino-acid chain; its full sequence is Ketol-acid reductoisomerase (NADP(+)) (339 aa).

One can recognise a KARI N-terminal Rossmann domain in the interval 1–182 (MRVYYDRDAD…GGGRSGIIET (182 aa)). NADP(+) contacts are provided by residues 24–27 (YGSQ), lysine 48, serine 51, threonine 53, and 83–86 (DELQ). Histidine 108 is an active-site residue. Glycine 134 provides a ligand contact to NADP(+). The region spanning 183–328 (TFQEECETDL…AKLRGMMPWI (146 aa)) is the KARI C-terminal knotted domain. Residues aspartate 191, glutamate 195, glutamate 227, and glutamate 231 each coordinate Mg(2+). Substrate is bound at residue serine 252.

The protein belongs to the ketol-acid reductoisomerase family. Mg(2+) is required as a cofactor.

It carries out the reaction (2R)-2,3-dihydroxy-3-methylbutanoate + NADP(+) = (2S)-2-acetolactate + NADPH + H(+). The catalysed reaction is (2R,3R)-2,3-dihydroxy-3-methylpentanoate + NADP(+) = (S)-2-ethyl-2-hydroxy-3-oxobutanoate + NADPH + H(+). It participates in amino-acid biosynthesis; L-isoleucine biosynthesis; L-isoleucine from 2-oxobutanoate: step 2/4. The protein operates within amino-acid biosynthesis; L-valine biosynthesis; L-valine from pyruvate: step 2/4. Functionally, involved in the biosynthesis of branched-chain amino acids (BCAA). Catalyzes an alkyl-migration followed by a ketol-acid reduction of (S)-2-acetolactate (S2AL) to yield (R)-2,3-dihydroxy-isovalerate. In the isomerase reaction, S2AL is rearranged via a Mg-dependent methyl migration to produce 3-hydroxy-3-methyl-2-ketobutyrate (HMKB). In the reductase reaction, this 2-ketoacid undergoes a metal-dependent reduction by NADPH to yield (R)-2,3-dihydroxy-isovalerate. This chain is Ketol-acid reductoisomerase (NADP(+)), found in Allorhizobium ampelinum (strain ATCC BAA-846 / DSM 112012 / S4) (Agrobacterium vitis (strain S4)).